The sequence spans 373 residues: Alginate lyase (373 aa).

The signal sequence occupies residues 1–25; sequence MRLPMQKLLIPTLLGLAMFAGSVNA. Residues 66–67, 139–140, and tyrosine 257 each bind substrate; these read SK and HT.

This sequence belongs to the polysaccharide lyase 5 family.

The protein localises to the periplasm. The catalysed reaction is Eliminative cleavage of alginate to give oligosaccharides with 4-deoxy-alpha-L-erythro-hex-4-enuronosyl groups at their non-reducing ends and beta-D-mannuronate at their reducing end.. Its function is as follows. Catalyzes the depolymerization of alginate by cleaving the beta-1,4 glycosidic bond between two adjacent sugar residues via a beta-elimination mechanism. May serve to degrade mislocalized alginate that is trapped in the periplasmic space. This is Alginate lyase from Pseudomonas fluorescens.